A 1652-amino-acid polypeptide reads, in one-letter code: Maestro heat-like repeat-containing protein family member 1 (1652 aa).

HEAT repeat units follow at residues 3 to 41 (ETYA…SKPA), 260 to 300 (EEQL…VGSR), 344 to 382 (CCSP…AAAA), 385 to 423 (EVKK…HGYL), 1369 to 1407 (LMLL…GSPD), 1410 to 1448 (QTHS…LMDL), and 1616 to 1652 (QVDL…VKFA).

Belongs to the MROH1 family. As to quaternary structure, homooligomer; homooligomerizes at lysosome scission sites.

The protein resides in the lysosome membrane. In terms of biological role, lysosome fission factor. Recruited to lysosomes by RAB7 (RAB7A or RAB7B) at scission sites and homooligomerizes to mediate the constriction and scission of lysosomal tubules. May sever membranes by inserting amphipathic helices into one bilayer leaflet. Lysosome fission is required to maintain their steady-state number, shape, size, composition and function, and to accomplish regeneration. The chain is Maestro heat-like repeat-containing protein family member 1 (MROH1) from Bos taurus (Bovine).